The sequence spans 309 residues: Agglutinin (309 aa).

The residue at position 1 (Met1) is an N-acetylmethionine. Jacalin-type lectin domains are found at residues 4–148 (FLTV…YVKI) and 163–308 (PRGP…HMEY).

It belongs to the jacalin lectin family.

Its function is as follows. D-mannose/D-glucose-binding lectin. Binds N-linked high-mannose-type glycans. Has a preference for smaller (Man(2)-Man(6)) high-mannose-type glycans to larger (Man(7)-Man(9)) ones. Recognizes both alpha1-6 extended and alpha1-3 extended monoantennary glycans. The addition of alpha1-2Man to the Man-alpha1-3Man-beta branch results in a significant loss of affinity, but beta1-2GlcNAc has some affinity. Has less affinity for biantennary glycans, and affinity is very weak for the biantennary complex-type N-glycans with bisecting GlcNAc. No affinity is observed for tri- and tetra-antennary glycans. Has mitogenic and hemagglutinating activities. The polypeptide is Agglutinin (Castanea crenata (Japanese chestnut)).